Here is a 393-residue protein sequence, read N- to C-terminus: RNA pseudouridine synthase 7 (393 aa).

The S4 RNA-binding domain maps to K49–A118. The active site involves D162.

The protein belongs to the pseudouridine synthase RluA family.

The catalysed reaction is a uridine in RNA = a pseudouridine in RNA. The protein is RNA pseudouridine synthase 7 of Oryza sativa subsp. japonica (Rice).